The sequence spans 81 residues: Costars family protein ABRACL (81 aa).

Met1 carries the N-acetylmethionine modification.

Belongs to the costars family.

This Bos taurus (Bovine) protein is Costars family protein ABRACL (ABRACL).